The sequence spans 187 residues: Phosphatidylethanolamine-binding protein 1 (187 aa).

Alanine 2 is modified (N-acetylalanine; in peptide hippocampal cholinergic neurostimulating). At serine 6 the chain carries Phosphoserine. Threonine 42 is modified (phosphothreonine). Phosphoserine occurs at positions 51, 52, 54, 98, and 132. The segment at 93–134 (KGNDISSGTVLSDYVGSGPPSGTGLHRYVWLVYEQEQPLSCD) is interaction with RAF1.

This sequence belongs to the phosphatidylethanolamine-binding protein family. Has a tendency to form dimers by disulfide cross-linking. Interacts with RAF1 and this interaction is enhanced if RAF1 is phosphorylated on residues 'Ser-338', 'Ser-339', 'Tyr-340' and 'Tyr-341'. Interacts with ALOX15; in response to IL13/interleukin-13, prevents the interaction of PEBP1 with RAF1 to activate the ERK signaling cascade. In terms of tissue distribution, HCNP is expressed in brain. Increased expression in aged senescence-accelerated mice.

The protein resides in the cytoplasm. Binds ATP, opioids and phosphatidylethanolamine. Has lower affinity for phosphatidylinositol and phosphatidylcholine. Serine protease inhibitor which inhibits thrombin, neuropsin and chymotrypsin but not trypsin, tissue type plasminogen activator and elastase. Inhibits the kinase activity of RAF1 by inhibiting its activation and by dissociating the RAF1/MEK complex and acting as a competitive inhibitor of MEK phosphorylation. Functionally, HCNP may be involved in the function of the presynaptic cholinergic neurons of the central nervous system. HCNP increases the production of choline acetyltransferase but not acetylcholinesterase. Seems to be mediated by a specific receptor. In Mus musculus (Mouse), this protein is Phosphatidylethanolamine-binding protein 1 (Pebp1).